The sequence spans 347 residues: Holliday junction branch migration complex subunit RuvB (347 aa).

A large ATPase domain (RuvB-L) region spans residues 1 to 185 (MSDDPTTPEL…FGFTAHLEFY (185 aa)). Residues L24, R25, G66, K69, T70, T71, 132-134 (EDF), R175, Y185, and R222 contribute to the ATP site. T70 serves as a coordination point for Mg(2+). The segment at 186–255 (DEGELAQVLA…AVHAALELYD (70 aa)) is small ATPAse domain (RuvB-S). A head domain (RuvB-H) region spans residues 258–347 (ELGLDRLDRA…SQPPSLMDDL (90 aa)). Residues R313 and R318 each contribute to the DNA site.

Belongs to the RuvB family. Homohexamer. Forms an RuvA(8)-RuvB(12)-Holliday junction (HJ) complex. HJ DNA is sandwiched between 2 RuvA tetramers; dsDNA enters through RuvA and exits via RuvB. An RuvB hexamer assembles on each DNA strand where it exits the tetramer. Each RuvB hexamer is contacted by two RuvA subunits (via domain III) on 2 adjacent RuvB subunits; this complex drives branch migration. In the full resolvosome a probable DNA-RuvA(4)-RuvB(12)-RuvC(2) complex forms which resolves the HJ.

It is found in the cytoplasm. It carries out the reaction ATP + H2O = ADP + phosphate + H(+). Functionally, the RuvA-RuvB-RuvC complex processes Holliday junction (HJ) DNA during genetic recombination and DNA repair, while the RuvA-RuvB complex plays an important role in the rescue of blocked DNA replication forks via replication fork reversal (RFR). RuvA specifically binds to HJ cruciform DNA, conferring on it an open structure. The RuvB hexamer acts as an ATP-dependent pump, pulling dsDNA into and through the RuvAB complex. RuvB forms 2 homohexamers on either side of HJ DNA bound by 1 or 2 RuvA tetramers; 4 subunits per hexamer contact DNA at a time. Coordinated motions by a converter formed by DNA-disengaged RuvB subunits stimulates ATP hydrolysis and nucleotide exchange. Immobilization of the converter enables RuvB to convert the ATP-contained energy into a lever motion, pulling 2 nucleotides of DNA out of the RuvA tetramer per ATP hydrolyzed, thus driving DNA branch migration. The RuvB motors rotate together with the DNA substrate, which together with the progressing nucleotide cycle form the mechanistic basis for DNA recombination by continuous HJ branch migration. Branch migration allows RuvC to scan DNA until it finds its consensus sequence, where it cleaves and resolves cruciform DNA. This Leifsonia xyli subsp. xyli (strain CTCB07) protein is Holliday junction branch migration complex subunit RuvB.